The primary structure comprises 251 residues: Derlin-1 (251 aa).

Ser-2 carries the post-translational modification N-acetylserine. The Cytoplasmic portion of the chain corresponds to 2–15 (SDIGDWFRSIPAIT). A helical transmembrane segment spans residues 16–31 (RYWFAATVAVPLIGKL). Residues 32 to 69 (GIISPAYFFLWPEAFLYRFQIWRPFTATFYFPVGPGTG) lie on the Lumenal side of the membrane. The chain crosses the membrane as a helical span at residues 70–89 (FLYLVNLYFLYQYSTRLEAG). The Cytoplasmic portion of the chain corresponds to 90–94 (AFDGR). A helical membrane pass occupies residues 95-115 (PADYLFMLLFNWICIVITGLA). The Lumenal segment spans residues 116–122 (MDMQLLM). Residues 123 to 137 (IPLIMSVLYVWAQLN) traverse the membrane as a helical segment. Over 138–154 (RDLIVSFWFGTRFKACY) the chain is Cytoplasmic. The helical transmembrane segment at 155 to 166 (LPWVILGFNYII) threads the bilayer. Residues 167-170 (GGSV) lie on the Lumenal side of the membrane. Residues 171–189 (INELIGNLVGHLYFFLMFR) traverse the membrane as a helical segment. Residues 190-251 (YPMDLGGRNF…WGQGFRLGDQ (62 aa)) lie on the Cytoplasmic side of the membrane. Phosphoserine is present on Ser-201. Thr-202 is subject to Phosphothreonine. The residue at position 226 (Ser-226) is a Phosphoserine. Positions 229 to 251 (RAADQNGGGGRHNWGQGFRLGDQ) are disordered. The SHP-box motif lies at 241–248 (NWGQGFRL).

Belongs to the derlin family. As to quaternary structure, homotetramer. The four subunits of the tetramer are arranged in a twofold symmetry. Forms homo- and heterooligomers with DERL2 and DERL3; binding to DERL3 is poorer than that between DERL2 and DERL3. Interacts (via SHP-box motif) with VCP. Interacts with AMFR, SELENOS, SEL1L, SELENOK and SYVN1, as well as with SEL1L-SYVN1 and VCP-SELENOS protein complexes; this interaction is weaker than that observed between DERL2 and these complexes. Interacts with NGLY1 and YOD1. Does not bind to EDEM1. Interacts with DNAJB9. Interacts with RNF103. Interacts with HM13. Interacts with XBP1 isoform 1 (via luminal/ectodomain domain); the interaction obviates the need for ectodomain shedding prior HM13/SPP-mediated XBP1 isoform 1 cleavage. Interacts with the signal recognition particle/SRP and the SRP receptor; in the process of endoplasmic reticulum stress-induced pre-emptive quality control. May interact with UBXN6. Interacts with ZFAND2B; probably through VCP. Interacts with CCDC47. Interacts with C18orf32. May interact with TRAM1. Forms a complex with SVIP and VCP/p97. Widely expressed, with lowest levels in brain and heart.

The protein localises to the endoplasmic reticulum membrane. Functional component of endoplasmic reticulum-associated degradation (ERAD) for misfolded lumenal proteins. Forms homotetramers which encircle a large channel traversing the endoplasmic reticulum (ER) membrane. This allows the retrotranslocation of misfolded proteins from the ER into the cytosol where they are ubiquitinated and degraded by the proteasome. The channel has a lateral gate within the membrane which provides direct access to membrane proteins with no need to reenter the ER lumen first. May mediate the interaction between VCP and the misfolded protein. Also involved in endoplasmic reticulum stress-induced pre-emptive quality control, a mechanism that selectively attenuates the translocation of newly synthesized proteins into the endoplasmic reticulum and reroutes them to the cytosol for proteasomal degradation. By controlling the steady-state expression of the IGF1R receptor, indirectly regulates the insulin-like growth factor receptor signaling pathway. The sequence is that of Derlin-1 from Mus musculus (Mouse).